A 419-amino-acid chain; its full sequence is Fusaric acid cluster transcription factor FUB10 (419 aa).

Residues 16–47 (CDRCRAQKLRCHRDSGHSTDACLRCLKSGIEC) constitute a DNA-binding region (zn(2)-C6 fungal-type). The disordered stretch occupies residues 50–92 (SKARPTGRPPSRQVQPTVVVEQGDTSSSSHTTDSSPSAGGTDM). Residues 74 to 86 (TSSSSHTTDSSPS) show a composition bias toward low complexity.

It is found in the nucleus. In terms of biological role, transcription factor that regulates the expression of the gene cluster that mediates the biosynthesis of fusaric acid, a mycotoxin with low to moderate toxicity to animals and humans, but with high phytotoxic properties. The polypeptide is Fusaric acid cluster transcription factor FUB10 (Gibberella fujikuroi (strain CBS 195.34 / IMI 58289 / NRRL A-6831) (Bakanae and foot rot disease fungus)).